A 43-amino-acid chain; its full sequence is Myotoxin-1 (43 aa).

Cystine bridges form between Cys-4–Cys-36, Cys-11–Cys-30, and Cys-18–Cys-37.

The protein belongs to the crotamine-myotoxin family. As to quaternary structure, monomer. Expressed by the venom gland.

It localises to the secreted. Cationic peptide that possesses multiple functions. It acts as a cell-penetrating peptide (CPP), and as a potent voltage-gated potassium channel (Kv) inhibitor. It exhibits antimicrobial activities, hind limb paralysis, and severe muscle necrosis by a non-enzymatic mechanism. The protein is Myotoxin-1 of Crotalus concolor (Midget faded rattlesnake).